Here is a 154-residue protein sequence, read N- to C-terminus: MGLSDGEWQLVLNVWGKVEADLAGHGQEVLIRLFKGHPETLEKFDKFKHLKSEDEMKGSEDLKKHGNTVLTALGGILKKKGHQEAELKPLAQSHATKHKIPVKYLEFISDAIAQVLQSKHPGNFAAEAQGAMKKALELFRNDIAAKYKELGFQG.

The Globin domain occupies Gly-2–Lys-148. Ser-4 carries the post-translational modification Phosphoserine. His-65 is a nitrite binding site. Residue His-65 participates in O2 binding. Phosphothreonine is present on Thr-68. Residue His-94 participates in heme b binding.

The protein belongs to the globin family. As to quaternary structure, monomeric.

Its subcellular location is the cytoplasm. It is found in the sarcoplasm. The catalysed reaction is Fe(III)-heme b-[protein] + nitric oxide + H2O = Fe(II)-heme b-[protein] + nitrite + 2 H(+). It catalyses the reaction H2O2 + AH2 = A + 2 H2O. Its function is as follows. Monomeric heme protein which primary function is to store oxygen and facilitate its diffusion within muscle tissues. Reversibly binds oxygen through a pentacoordinated heme iron and enables its timely and efficient release as needed during periods of heightened demand. Depending on the oxidative conditions of tissues and cells, and in addition to its ability to bind oxygen, it also has a nitrite reductase activity whereby it regulates the production of bioactive nitric oxide. Under stress conditions, like hypoxia and anoxia, it also protects cells against reactive oxygen species thanks to its pseudoperoxidase activity. This Meles meles (Eurasian badger) protein is Myoglobin (MB).